Reading from the N-terminus, the 971-residue chain is uncharacterized protein (971 aa).

A signal peptide spans 1 to 24 (MQSNLLKVLGVLAIVATLVCFIFA). The segment at 127-146 (RTRPGKSNLDDSGQMIPIPR) is disordered. The next 6 membrane-spanning stretches (helical) occupy residues 611–631 (IKAILILYVMTYGAMFLLGFA), 721–741 (LGLSGIIYFIITFIAICIVII), 753–773 (AFMATCILIGIAPLFISFLLF), 795–815 (VVMMAGIIVLTQLFTIYLDFV), 832–852 (FIGTILPIALLNVPIFCINWF), and 865–885 (GVNMQNIVALVIIAYGMYGYV). Positions 933–971 (TGRAKSRLEQRNRTLEHAEQNSKKYKKRIGENTNEETLK) are disordered. Residues 938 to 954 (SRLEQRNRTLEHAEQNS) show a composition bias toward basic and acidic residues.

Belongs to the TrbL/VirB6 family.

The protein localises to the cell membrane. This is an uncharacterized protein from Rickettsia prowazekii (strain Madrid E).